The primary structure comprises 997 residues: Phosphoenolpyruvate carboxylase (997 aa).

The disordered stretch occupies residues 1-67; that stretch reads MKSSGSARTA…KPAARTREDK (67 aa). Catalysis depends on residues His207 and Lys649.

It belongs to the PEPCase type 1 family. Mg(2+) serves as cofactor.

The catalysed reaction is oxaloacetate + phosphate = phosphoenolpyruvate + hydrogencarbonate. Functionally, forms oxaloacetate, a four-carbon dicarboxylic acid source for the tricarboxylic acid cycle. The polypeptide is Phosphoenolpyruvate carboxylase (Burkholderia vietnamiensis (strain G4 / LMG 22486) (Burkholderia cepacia (strain R1808))).